The following is a 694-amino-acid chain: uncharacterized protein (694 aa).

Residues 15–51 adopt a coiled-coil conformation; the sequence is HKEKMELLDQFDNERKEWESQWKIMQKKIEELCREVK. Disordered stretches follow at residues 259–286, 461–490, and 643–680; these read LKRN…EQAY, QNHS…QSND, and NASH…RRTT. Composition is skewed to polar residues over residues 272-283 and 476-490; these read STSRNFPSSDSE and DTSS…QSND. Over residues 663-677 the composition is skewed to low complexity; the sequence is SRWASRSPSAPPALR.

This is an uncharacterized protein from Homo sapiens (Human).